Reading from the N-terminus, the 86-residue chain is MAQKKGGGSTRNGRDSESKRLGVKVFGGEYINAGSIIIRQRGTRVHPGANVGIGKDHTLFALIDGQVEFGVKGALKKAQVSVLPRS.

Positions 1 to 10 (MAQKKGGGST) are enriched in gly residues. A disordered region spans residues 1–20 (MAQKKGGGSTRNGRDSESKR).

Belongs to the bacterial ribosomal protein bL27 family.

This is Large ribosomal subunit protein bL27 from Polynucleobacter necessarius subsp. necessarius (strain STIR1).